The chain runs to 405 residues: Sesquiterpene synthase 16 (405 aa).

Mg(2+) is bound by residues D155, D159, and E309. Positions 155 to 159 (DDTYD) match the DDXXD motif motif.

Belongs to the terpene synthase family. Tpsa subfamily. Requires Mg(2+) as cofactor. The cofactor is Mn(2+).

It participates in secondary metabolite biosynthesis; terpenoid biosynthesis. Sesquiterpene synthase involved in the biosynthesis of volatile compounds. No activity detected with geranyl diphosphate (GPP) and farnesyl diphosphate (FPP) as substrates. This chain is Sesquiterpene synthase 16, found in Solanum habrochaites (Wild tomato).